Here is a 353-residue protein sequence, read N- to C-terminus: MSSPLSLQTLVKKTVASTSCLSIDEHILKYCGLWWHDAPLKLYIDRGRIYIKSGFLGEDIDLCVALIIAVKENNYSLIKLFTEWGAYINYSLLSINTKHARDLCRQLGAKETLDDYDIFCIFNKIMHNKTSGSIILCHEIFINNPKLENNFAAQLRRLIYKRLCGLIEIKETDELSELLVKYWYANAVQYDHKDAICFLDEKYTDLDEWRLKCYLCYNKIYELHDIYHKKKIQIDVNEMLSLACIRDNNLLTIYYCYALGGNINQAMLTSVQYYNIGNIYFCIDLGGNAFEEGSAIARQNGYNFLCHSLILNIYSSDASLPLNLKVPEEISSLLKNYKSKNLSIILDYSHKIL.

This sequence belongs to the asfivirus MGF 360 family.

Its function is as follows. Plays a role in virus cell tropism, and may be required for efficient virus replication in macrophages. The sequence is that of Protein MGF 360-13L from African swine fever virus (isolate Pig/Kenya/KEN-50/1950) (ASFV).